Consider the following 283-residue polypeptide: Aldo-keto reductase MSMEG_2407/MSMEI_2346 (283 aa).

Catalysis depends on tyrosine 58, which acts as the Proton donor. NADPH is bound by residues glycine 196, leucine 198, valine 200, isoleucine 236, arginine 238, serine 239, alanine 240, arginine 244, serine 247, asparagine 248, and arginine 274.

It belongs to the aldo/keto reductase family. As to quaternary structure, monomer.

Inhibited by the antituberculosis drug isoniazid (INH). Functionally, catalyzes the NADPH-dependent reduction of dicarbonyls. Exhibits narrow substrate specificity, with preferential activity against the dicarbonyl substrates phenylglyoxal and methylglyoxal. Exhibits weak activity with ethyl-2-methyl acetoacetate. Cannot use NADH. May play an important role in the detoxification of methylglyoxal. The sequence is that of Aldo-keto reductase MSMEG_2407/MSMEI_2346 from Mycolicibacterium smegmatis (strain ATCC 700084 / mc(2)155) (Mycobacterium smegmatis).